We begin with the raw amino-acid sequence, 448 residues long: Alginate biosynthesis transcriptional regulatory protein AlgB (448 aa).

In terms of domain architecture, Response regulatory spans 10-124; that stretch reads RILLVDDESA…QLRLATAKQL (115 aa). The residue at position 59 (Asp59) is a 4-aspartylphosphate. One can recognise a Sigma-54 factor interaction domain in the interval 147 to 376; it reads LDSHSPSMMA…LRNVIERASI (230 aa). ATP is bound by residues 175-182 and 238-247; these read GESGTGKG and ADGGTLFLDE. Residues 425 to 444 constitute a DNA-binding region (H-T-H motif); that stretch reads LDQAAKTLGIDASTLYRKRK.

Its pathway is glycan biosynthesis; alginate biosynthesis [regulation]. Functionally, positive regulator of the alginate biosynthetic gene algD. This Pseudomonas syringae pv. tomato (strain ATCC BAA-871 / DC3000) protein is Alginate biosynthesis transcriptional regulatory protein AlgB (algB).